The sequence spans 243 residues: Small ribosomal subunit protein uS3 (243 aa).

Residues 39–110 form the KH type-2 domain; that stretch reads IRKFIHKKYG…QVRINVVEVE (72 aa). Residues 217–243 form a disordered region; that stretch reads QQLPVGATPRRRAGRRPQQFEDRSNEG. The segment covering 234 to 243 has biased composition (basic and acidic residues); sequence QQFEDRSNEG.

This sequence belongs to the universal ribosomal protein uS3 family. As to quaternary structure, part of the 30S ribosomal subunit. Forms a tight complex with proteins S10 and S14.

Its function is as follows. Binds the lower part of the 30S subunit head. Binds mRNA in the 70S ribosome, positioning it for translation. The chain is Small ribosomal subunit protein uS3 from Synechococcus sp. (strain WH7803).